Reading from the N-terminus, the 873-residue chain is Coatomer subunit gamma-2 (873 aa).

Residues 1-11 (MIKKFDKKDEE) are compositionally biased toward basic and acidic residues. The segment at 1-21 (MIKKFDKKDEESGSGSNPFQH) is disordered. HEAT repeat units lie at residues 64–101 (TEAT…ISED), 283–320 (RELA…KHPS), 321–355 (AVTA…GSES), 356–392 (SVDR…KYPR), 395–430 (SVMM…ENPE), and 467–504 (PTPS…QNDD).

This sequence belongs to the COPG family. Oligomeric complex.

It localises to the cytoplasm. The protein resides in the golgi apparatus membrane. It is found in the cytoplasmic vesicle. Its subcellular location is the COPI-coated vesicle membrane. Functionally, the coatomer is a cytosolic protein complex that binds to dilysine motifs and reversibly associates with Golgi non-clathrin-coated vesicles, which further mediate biosynthetic protein transport from the ER, via the Golgi up to the trans Golgi network. Coatomer complex is required for budding from Golgi membranes, and is essential for the retrograde Golgi-to-ER transport of dilysine-tagged proteins. This is Coatomer subunit gamma-2 (copg2) from Danio rerio (Zebrafish).